The primary structure comprises 352 residues: Ion-translocating oxidoreductase complex subunit D (352 aa).

5 helical membrane-spanning segments follow: residues isoleucine 20–glycine 40, glycine 42–leucine 62, alanine 78–alanine 109, proline 123–leucine 143, and isoleucine 148–alanine 168. The residue at position 187 (threonine 187) is an FMN phosphoryl threonine. The next 5 helical transmembrane spans lie at isoleucine 214–leucine 234, tryptophan 242–phenylalanine 262, leucine 267–leucine 287, leucine 301–proline 321, and aspartate 322–threonine 342.

The protein belongs to the NqrB/RnfD family. The complex is composed of six subunits: RsxA, RsxB, RsxC, RsxD, RsxE and RsxG. FMN is required as a cofactor.

It localises to the cell inner membrane. In terms of biological role, part of a membrane-bound complex that couples electron transfer with translocation of ions across the membrane. Required to maintain the reduced state of SoxR. This chain is Ion-translocating oxidoreductase complex subunit D, found in Shigella dysenteriae serotype 1 (strain Sd197).